Reading from the N-terminus, the 475-residue chain is Ubiquilin-like protein (475 aa).

The 75-residue stretch at 31-105 folds into the Ubiquitin-like domain; sequence TRVIVKTAGN…IYLVIKSKQG (75 aa). Disordered stretches follow at residues 113-138 and 305-325; these read FRDL…VHQP and QVQS…QLTQ. Residues 129-138 show a composition bias toward polar residues; the sequence is KGNSSRVHQP.

This Homo sapiens (Human) protein is Ubiquilin-like protein (UBQLNL).